A 144-amino-acid chain; its full sequence is Large ribosomal subunit protein uL16 (144 aa).

This sequence belongs to the universal ribosomal protein uL16 family. In terms of assembly, part of the 50S ribosomal subunit.

Its function is as follows. Binds 23S rRNA and is also seen to make contacts with the A and possibly P site tRNAs. This chain is Large ribosomal subunit protein uL16, found in Clostridium perfringens (strain ATCC 13124 / DSM 756 / JCM 1290 / NCIMB 6125 / NCTC 8237 / Type A).